The chain runs to 80 residues: Putative antitoxin VapB44 (80 aa).

Positions 40–68 are disordered; the sequence is NQNPQPAASQEDAFHGFEPLPHRGGAVSN.

In terms of biological role, possibly the antitoxin component of a type II toxin-antitoxin (TA) system. Its cognate toxin is VapC44 (Potential). The sequence is that of Putative antitoxin VapB44 (vapB44) from Mycobacterium tuberculosis (strain CDC 1551 / Oshkosh).